The primary structure comprises 179 residues: Calcineurin subunit B type 2 (179 aa).

The N-myristoyl glycine moiety is linked to residue glycine 2. EF-hand domains follow at residues 18-53 (EEIR…QQNP), 57-85 (RVID…FSVK), 87-122 (DEEQ…MVGN), and 128-163 (QLQQ…MEIH). Residues aspartate 31, aspartate 33, serine 35, serine 37, glutamate 42, aspartate 63, aspartate 65, asparagine 67, glutamate 69, glutamate 74, aspartate 100, aspartate 102, aspartate 104, and glutamate 111 each coordinate Ca(2+). The calcineurin A binding stretch occupies residues 131 to 136 (QLVDKS). Ca(2+) is bound by residues aspartate 141, aspartate 143, aspartate 145, arginine 147, and glutamate 152.

The protein belongs to the calcineurin regulatory subunit family. Forms a complex composed of a calmodulin-dependent catalytic subunit (also known as calcineurin A) and a regulatory Ca(2+)-binding subunit (also known as calcineurin B). There are three catalytic subunits, each encoded by a separate gene (PPP3CA, PPP3CB, and PPP3CC) and two regulatory subunits which are also encoded by separate genes (PPP3R1 and PPP3R2). Interacts with SPATA33 (via PQIIIT motif). Expressed in osteoblasts and bone marrow (at protein level). Expressed in the testis. Expressed in the sperm midpiece in a SPATA33-dependent manner (at protein level).

It localises to the mitochondrion. Its function is as follows. Regulatory subunit of calcineurin, a calcium-dependent, calmodulin stimulated protein phosphatase. Confers calcium sensitivity. The polypeptide is Calcineurin subunit B type 2 (Ppp3r2) (Mus musculus (Mouse)).